A 654-amino-acid chain; its full sequence is Tumor necrosis factor alpha-induced protein 2 (654 aa).

2 disordered regions span residues 1 to 38 and 50 to 78; these read MSEASSEDLVPPLEAGAAPYREEEEAAKKKKEKKKKSK and GKKKKGQPSSAEPEDAAGSRQGLDGPPPT. Basic residues predominate over residues 28 to 38; the sequence is KKKKEKKKKSK.

The protein belongs to the SEC6 family.

Its function is as follows. May play a role as a mediator of inflammation and angiogenesis. In Homo sapiens (Human), this protein is Tumor necrosis factor alpha-induced protein 2 (TNFAIP2).